A 101-amino-acid chain; its full sequence is Urease subunit beta (101 aa).

Belongs to the urease beta subunit family. In terms of assembly, heterotrimer of UreA (gamma), UreB (beta) and UreC (alpha) subunits. Three heterotrimers associate to form the active enzyme.

It localises to the cytoplasm. The catalysed reaction is urea + 2 H2O + H(+) = hydrogencarbonate + 2 NH4(+). It functions in the pathway nitrogen metabolism; urea degradation; CO(2) and NH(3) from urea (urease route): step 1/1. In Ectopseudomonas mendocina (strain ymp) (Pseudomonas mendocina), this protein is Urease subunit beta.